Reading from the N-terminus, the 243-residue chain is Probable transcriptional regulatory protein BDU_30 (243 aa).

Belongs to the TACO1 family.

It is found in the cytoplasm. The chain is Probable transcriptional regulatory protein BDU_30 from Borrelia duttonii (strain Ly).